We begin with the raw amino-acid sequence, 483 residues long: Protein nucleotidyltransferase YdiU (483 aa).

8 residues coordinate ATP: G87, G89, R90, K110, D122, G123, R173, and R180. Catalysis depends on D249, which acts as the Proton acceptor. Residues N250 and D259 each coordinate Mg(2+). D259 is a binding site for ATP.

This sequence belongs to the SELO family. Mg(2+) serves as cofactor. Requires Mn(2+) as cofactor.

It carries out the reaction L-seryl-[protein] + ATP = 3-O-(5'-adenylyl)-L-seryl-[protein] + diphosphate. It catalyses the reaction L-threonyl-[protein] + ATP = 3-O-(5'-adenylyl)-L-threonyl-[protein] + diphosphate. The catalysed reaction is L-tyrosyl-[protein] + ATP = O-(5'-adenylyl)-L-tyrosyl-[protein] + diphosphate. The enzyme catalyses L-histidyl-[protein] + UTP = N(tele)-(5'-uridylyl)-L-histidyl-[protein] + diphosphate. It carries out the reaction L-seryl-[protein] + UTP = O-(5'-uridylyl)-L-seryl-[protein] + diphosphate. It catalyses the reaction L-tyrosyl-[protein] + UTP = O-(5'-uridylyl)-L-tyrosyl-[protein] + diphosphate. Its function is as follows. Nucleotidyltransferase involved in the post-translational modification of proteins. It can catalyze the addition of adenosine monophosphate (AMP) or uridine monophosphate (UMP) to a protein, resulting in modifications known as AMPylation and UMPylation. In Pectobacterium atrosepticum (strain SCRI 1043 / ATCC BAA-672) (Erwinia carotovora subsp. atroseptica), this protein is Protein nucleotidyltransferase YdiU.